We begin with the raw amino-acid sequence, 118 residues long: Large ribosomal subunit protein bL19 (118 aa).

It belongs to the bacterial ribosomal protein bL19 family.

Functionally, this protein is located at the 30S-50S ribosomal subunit interface and may play a role in the structure and function of the aminoacyl-tRNA binding site. The polypeptide is Large ribosomal subunit protein bL19 (Helicobacter acinonychis (strain Sheeba)).